A 306-amino-acid chain; its full sequence is Glycine--tRNA ligase alpha subunit (306 aa).

The protein belongs to the class-II aminoacyl-tRNA synthetase family. Tetramer of two alpha and two beta subunits.

It is found in the cytoplasm. The enzyme catalyses tRNA(Gly) + glycine + ATP = glycyl-tRNA(Gly) + AMP + diphosphate. The polypeptide is Glycine--tRNA ligase alpha subunit (Aliivibrio fischeri (strain ATCC 700601 / ES114) (Vibrio fischeri)).